Reading from the N-terminus, the 368-residue chain is Aspartate-semialdehyde dehydrogenase (368 aa).

NADP(+)-binding positions include 10–13, 37–38, and Gln72; these read RGMV and TS. Arg101 serves as a coordination point for phosphate. Cys134 functions as the Acyl-thioester intermediate in the catalytic mechanism. Residues 160 to 161 and Pro191 each bind NADP(+); that span reads SG. Substrate is bound at residue Glu239. Position 242 (Lys242) interacts with phosphate. Arg266 is a substrate binding site. His273 (proton acceptor) is an active-site residue. Gln349 contributes to the NADP(+) binding site.

It belongs to the aspartate-semialdehyde dehydrogenase family. In terms of assembly, homodimer.

The catalysed reaction is L-aspartate 4-semialdehyde + phosphate + NADP(+) = 4-phospho-L-aspartate + NADPH + H(+). It functions in the pathway amino-acid biosynthesis; L-lysine biosynthesis via DAP pathway; (S)-tetrahydrodipicolinate from L-aspartate: step 2/4. It participates in amino-acid biosynthesis; L-methionine biosynthesis via de novo pathway; L-homoserine from L-aspartate: step 2/3. The protein operates within amino-acid biosynthesis; L-threonine biosynthesis; L-threonine from L-aspartate: step 2/5. Catalyzes the NADPH-dependent formation of L-aspartate-semialdehyde (L-ASA) by the reductive dephosphorylation of L-aspartyl-4-phosphate. The sequence is that of Aspartate-semialdehyde dehydrogenase from Azotobacter vinelandii.